The following is a 285-amino-acid chain: tRNA U34 carboxymethyltransferase (285 aa).

Carboxy-S-adenosyl-L-methionine-binding positions include Lys-56, Trp-70, Lys-75, Gly-94, 143–144 (VE), Tyr-163, and Arg-278.

This sequence belongs to the class I-like SAM-binding methyltransferase superfamily. CmoB family. As to quaternary structure, homotetramer.

It carries out the reaction carboxy-S-adenosyl-L-methionine + 5-hydroxyuridine(34) in tRNA = 5-carboxymethoxyuridine(34) in tRNA + S-adenosyl-L-homocysteine + H(+). In terms of biological role, catalyzes carboxymethyl transfer from carboxy-S-adenosyl-L-methionine (Cx-SAM) to 5-hydroxyuridine (ho5U) to form 5-carboxymethoxyuridine (cmo5U) at position 34 in tRNAs. This Campylobacter hominis (strain ATCC BAA-381 / DSM 21671 / CCUG 45161 / LMG 19568 / NCTC 13146 / CH001A) protein is tRNA U34 carboxymethyltransferase.